We begin with the raw amino-acid sequence, 234 residues long: MSILHATILTVFPEMFPGTLGHSLAGQALNKNIWSYDVINIRDFGLTKHKNIDDEAYGGGNGLIMRPDVLGSSIDHALALNPNAEMYYPSPRGRVFTQSFAKEMLKNKNLIFLCGRYEGIDERVIEEYNVKEISVGDYILSGGEIPTLTILDCLIRLLPGVLMNQNTLSSESFEEDGEFKGGLECSLYTRPEIWRNRAVPSVLLSGNHRLINEWKKAQSHMITKLRRPELLKDL.

Residues glycine 115 and 135 to 140 (VGDYIL) each bind S-adenosyl-L-methionine.

This sequence belongs to the RNA methyltransferase TrmD family. As to quaternary structure, homodimer.

It localises to the cytoplasm. It carries out the reaction guanosine(37) in tRNA + S-adenosyl-L-methionine = N(1)-methylguanosine(37) in tRNA + S-adenosyl-L-homocysteine + H(+). In terms of biological role, specifically methylates guanosine-37 in various tRNAs. This is tRNA (guanine-N(1)-)-methyltransferase from Rickettsia rickettsii (strain Iowa).